The following is a 462-amino-acid chain: ATP synthase subunit beta (462 aa).

151 to 158 lines the ATP pocket; sequence GGAGVGKT.

The protein belongs to the ATPase alpha/beta chains family. As to quaternary structure, F-type ATPases have 2 components, CF(1) - the catalytic core - and CF(0) - the membrane proton channel. CF(1) has five subunits: alpha(3), beta(3), gamma(1), delta(1), epsilon(1). CF(0) has four main subunits: a(1), b(1), b'(1) and c(9-12).

Its subcellular location is the cell inner membrane. It carries out the reaction ATP + H2O + 4 H(+)(in) = ADP + phosphate + 5 H(+)(out). Its function is as follows. Produces ATP from ADP in the presence of a proton gradient across the membrane. The catalytic sites are hosted primarily by the beta subunits. This is ATP synthase subunit beta from Chlorobium phaeobacteroides (strain BS1).